An 868-amino-acid chain; its full sequence is DNA replication licensing factor MCM2 (868 aa).

2 disordered regions span residues 1–65 and 87–106; these read MSDN…DEVE and NRDR…ELSL. Phosphoserine is present on residues Ser-14, Ser-16, and Ser-23. The segment covering 49 to 65 has biased composition (acidic residues); sequence EGDDNEVDDVPDIDEVE. A phosphoserine mark is found at Ser-164 and Ser-170. The segment at 341–367 adopts a C4-type zinc-finger fold; it reads CLKCGSILGPFFQDSNEEIRISFCTNC. An MCM domain is found at 493–700; that stretch reads IIDKIISSMA…ADERLATFVV (208 aa). An ATP-binding site is contributed by 543-550; that stretch reads GDPGTAKS. Positions 675 to 678 match the Arginine finger motif; sequence SRFD. Residues 704 to 728 form a disordered region; the sequence is VRSHPENDEDREGEELKNNGESAIE.

Belongs to the MCM family. In terms of assembly, component of the MCM2-7 complex. The complex forms a toroidal hexameric ring with the proposed subunit order MCM2-MCM6-MCM4-MCM7-MCM3-MCM5; loaded onto DNA, forms a head-head double hexamer.

Its subcellular location is the nucleus. The catalysed reaction is ATP + H2O = ADP + phosphate + H(+). Acts as a component of the MCM2-7 complex (MCM complex) which is the putative replicative helicase essential for 'once per cell cycle' DNA replication initiation and elongation in eukaryotic cells. The active ATPase sites in the MCM2-7 ring are formed through the interaction surfaces of two neighboring subunits such that a critical structure of a conserved arginine finger motif is provided in trans relative to the ATP-binding site of the Walker A box of the adjacent subunit. The six ATPase active sites, however, are likely to contribute differentially to the complex helicase activity; specifically the MCM2-MCM5 association is proposed to be reversible and to mediate a open ring conformation which may facilitate DNA loading. Once loaded onto DNA, double hexamers can slide on dsDNA in the absence of ATPase activity. Necessary for cell growth. This Saccharomyces cerevisiae (strain ATCC 204508 / S288c) (Baker's yeast) protein is DNA replication licensing factor MCM2 (MCM2).